A 1040-amino-acid chain; its full sequence is Multidrug resistance protein MdtB (1040 aa).

The next 12 membrane-spanning stretches (helical) occupy residues 25-45 (LLMAAILLAGIIGYRFLPVAA), 347-367 (LMLAIALVVMIIYLFLRNIPA), 369-389 (IIPGVAVPLSLIGTFAVMVFL), 396-416 (LTLMALTIATGFVVDDAIVVI), 440-460 (IGFTIISLTFSLIAVLIPLLF), 472-492 (FAVTLAVAILISAVVSLTLTP), 537-557 (WLTLSVAFATLLLSVMLWIVI), 863-883 (LGSTVWLIVAAVVAMYIVLGV), 888-908 (FIHPITILSTLPTAGVGALLA), 910-930 (IIAGSELDIIAIIGIILLIGI), 968-988 (ILMTTLAALLGALPLMLSTGV), and 998-1018 (IAMVGGLLVSQVLTLFTTPVI).

Belongs to the resistance-nodulation-cell division (RND) (TC 2.A.6) family. MdtB subfamily. In terms of assembly, part of a tripartite efflux system composed of MdtA, MdtB and MdtC. MdtB forms a heteromultimer with MdtC.

Its subcellular location is the cell inner membrane. The protein is Multidrug resistance protein MdtB of Salmonella agona (strain SL483).